Consider the following 312-residue polypeptide: Elongation factor Ts (312 aa).

An involved in Mg(2+) ion dislocation from EF-Tu region spans residues 84 to 87; the sequence is TDFL.

Belongs to the EF-Ts family.

It localises to the cytoplasm. Functionally, associates with the EF-Tu.GDP complex and induces the exchange of GDP to GTP. It remains bound to the aminoacyl-tRNA.EF-Tu.GTP complex up to the GTP hydrolysis stage on the ribosome. This Caulobacter sp. (strain K31) protein is Elongation factor Ts.